A 306-amino-acid chain; its full sequence is Oxygen-dependent coproporphyrinogen-III oxidase (306 aa).

Substrate is bound at residue S93. H97 and H107 together coordinate a divalent metal cation. H107 (proton donor) is an active-site residue. 109–111 is a binding site for substrate; it reads NVR. A divalent metal cation is bound by residues H146 and H176. The tract at residues 241–276 is important for dimerization; it reads YVEYNLVYDRGTLFGLQSGGRTESILMSLPPQVAWG. Position 259–261 (259–261) interacts with substrate; that stretch reads GGR.

It belongs to the aerobic coproporphyrinogen-III oxidase family. As to quaternary structure, homodimer. The cofactor is a divalent metal cation.

The protein localises to the cytoplasm. It carries out the reaction coproporphyrinogen III + O2 + 2 H(+) = protoporphyrinogen IX + 2 CO2 + 2 H2O. It participates in porphyrin-containing compound metabolism; protoporphyrin-IX biosynthesis; protoporphyrinogen-IX from coproporphyrinogen-III (O2 route): step 1/1. Functionally, involved in the heme biosynthesis. Catalyzes the aerobic oxidative decarboxylation of propionate groups of rings A and B of coproporphyrinogen-III to yield the vinyl groups in protoporphyrinogen-IX. The sequence is that of Oxygen-dependent coproporphyrinogen-III oxidase from Stutzerimonas stutzeri (strain A1501) (Pseudomonas stutzeri).